The following is a 130-amino-acid chain: RNA silencing suppressor p14 (130 aa).

In terms of biological role, acts as a suppressor of RNA-mediated gene silencing, also known as post-transcriptional gene silencing (PTGS), a mechanism of plant viral defense that limits the accumulation of viral RNAs. Binds to dsRNAs without size specificity. This chain is RNA silencing suppressor p14, found in Pothos latent virus (isolate Pigeonpea/India) (PoLV).